Here is a 376-residue protein sequence, read N- to C-terminus: Alcohol dehydrogenase 6 (376 aa).

Cys-47, His-69, Cys-99, Cys-102, Cys-105, Cys-113, and Cys-175 together coordinate Zn(2+). NAD(+)-binding positions include 200–205 (GLGGVG), Asp-224, Arg-229, 293–295 (VGA), and Arg-371.

The protein belongs to the zinc-containing alcohol dehydrogenase family. Class-V subfamily. In terms of assembly, dimer. Requires Zn(2+) as cofactor.

It localises to the cytoplasm. The enzyme catalyses a primary alcohol + NAD(+) = an aldehyde + NADH + H(+). The catalysed reaction is a secondary alcohol + NAD(+) = a ketone + NADH + H(+). Its function is as follows. Alcohol dehydrogenase. Catalyzes the NAD-dependent oxidation of primary alcohols to the corresponding aldehydes. Oxidizes secondary alcohols to the corresponding ketones. This chain is Alcohol dehydrogenase 6 (Adh6), found in Rattus norvegicus (Rat).